Here is a 140-residue protein sequence, read N- to C-terminus: Peptidyl-prolyl cis-trans isomerase FKBP2 (140 aa).

The first 20 residues, 1-20 (MRLSWVLTVLSICLSALVTA), serve as a signal peptide directing secretion. The PPIase FKBP-type domain occupies 47-135 (GDVLHMHYTG…VFEVELLKIE (89 aa)).

The protein belongs to the FKBP-type PPIase family. FKBP2 subfamily. In terms of assembly, interacts with ARFGEF1/BIG1 and the C-terminal of EPB41L2.

The protein localises to the endoplasmic reticulum membrane. It catalyses the reaction [protein]-peptidylproline (omega=180) = [protein]-peptidylproline (omega=0). Inhibited by both FK506 and rapamycin. PPIases accelerate the folding of proteins. It catalyzes the cis-trans isomerization of proline imidic peptide bonds in oligopeptides. In Bos taurus (Bovine), this protein is Peptidyl-prolyl cis-trans isomerase FKBP2 (FKBP2).